The chain runs to 975 residues: Glycine dehydrogenase (decarboxylating) (975 aa).

K702 is subject to N6-(pyridoxal phosphate)lysine.

The protein belongs to the GcvP family. The glycine cleavage system is composed of four proteins: P, T, L and H. Requires pyridoxal 5'-phosphate as cofactor.

It catalyses the reaction N(6)-[(R)-lipoyl]-L-lysyl-[glycine-cleavage complex H protein] + glycine + H(+) = N(6)-[(R)-S(8)-aminomethyldihydrolipoyl]-L-lysyl-[glycine-cleavage complex H protein] + CO2. Its function is as follows. The glycine cleavage system catalyzes the degradation of glycine. The P protein binds the alpha-amino group of glycine through its pyridoxal phosphate cofactor; CO(2) is released and the remaining methylamine moiety is then transferred to the lipoamide cofactor of the H protein. This Xanthomonas campestris pv. campestris (strain 8004) protein is Glycine dehydrogenase (decarboxylating).